A 467-amino-acid chain; its full sequence is Probable glycerol-3-phosphate dehydrogenase [NAD(+)] 2, cytosolic (467 aa).

Residues 47–52 (GAGAWG), K195, and A234 contribute to the NAD(+) site. Substrate is bound at residue K195. The Proton acceptor role is filled by K284. 2 residues coordinate NAD(+): R346 and Q374. 346–347 (RN) contributes to the substrate binding site.

The protein belongs to the NAD-dependent glycerol-3-phosphate dehydrogenase family.

Its subcellular location is the cytoplasm. The protein localises to the cytosol. The catalysed reaction is sn-glycerol 3-phosphate + NAD(+) = dihydroxyacetone phosphate + NADH + H(+). May be involved in cell redox homeostasis. The chain is Probable glycerol-3-phosphate dehydrogenase [NAD(+)] 2, cytosolic from Oryza sativa subsp. japonica (Rice).